The following is a 1377-amino-acid chain: Clustered mitochondria protein homolog (1377 aa).

The tract at residues 1 to 61 (MLKSIQRNGK…GETKKKSDSE (61 aa)) is disordered. Positions 353 to 595 (RAEDTFSSKL…RTFPPDVNFL (243 aa)) constitute a Clu domain. A TPR 1 repeat occupies 519–552 (VYGSIDFGKTVLSHEKYLELLNNAGKHLKIYPHS). Disordered stretches follow at residues 651–700 (NKRQ…VPKV) and 886–917 (DVLTKSGSSGKQQRKQNKRTAAGGGKGGKSSF). Positions 655-690 (QKQDTPKEETKAIEPAAKEDSANNNKEEPAAKKGEP) are enriched in basic and acidic residues. Positions 886 to 896 (DVLTKSGSSGK) are enriched in polar residues. 3 TPR repeats span residues 1022-1055 (AYNFYTTGQTKIQQGYFKDGYDLISEALNLLNNV), 1148-1181 (ALLDSNISLILHAVGEYELSLRFLEHALALNIKY), and 1183-1216 (GEKSLKVAVSYHLVARTQSCMGDFRSALNNEKET). The tract at residues 1310–1377 (KEGGAAGESS…SKANPVASSS (68 aa)) is disordered. The segment covering 1364 to 1377 (ASSSSKANPVASSS) has biased composition (low complexity).

It belongs to the CLU family.

Its subcellular location is the cytoplasm. In terms of biological role, mRNA-binding protein involved in proper cytoplasmic distribution of mitochondria. The polypeptide is Clustered mitochondria protein homolog (Culex quinquefasciatus (Southern house mosquito)).